Here is a 297-residue protein sequence, read N- to C-terminus: Acetylglutamate kinase (297 aa).

Residues 72 to 73, Arg-94, and Asn-187 each bind substrate; that span reads GG.

It belongs to the acetylglutamate kinase family. ArgB subfamily.

Its subcellular location is the cytoplasm. The catalysed reaction is N-acetyl-L-glutamate + ATP = N-acetyl-L-glutamyl 5-phosphate + ADP. Its pathway is amino-acid biosynthesis; L-arginine biosynthesis; N(2)-acetyl-L-ornithine from L-glutamate: step 2/4. In terms of biological role, catalyzes the ATP-dependent phosphorylation of N-acetyl-L-glutamate. In Synechocystis sp. (strain ATCC 27184 / PCC 6803 / Kazusa), this protein is Acetylglutamate kinase.